Reading from the N-terminus, the 286-residue chain is Neuferricin homolog (286 aa).

Positions M1 to G23 are cleaved as a signal peptide. The Cytochrome b5 heme-binding domain occupies A61 to N145. Residues H176–P200 adopt a coiled-coil conformation.

The protein belongs to the cytochrome b5 family. MAPR subfamily.

It is found in the secreted. In terms of biological role, heme-binding protein. The sequence is that of Neuferricin homolog from Drosophila pseudoobscura pseudoobscura (Fruit fly).